Here is a 425-residue protein sequence, read N- to C-terminus: Keratin, type II cytoskeletal I (425 aa).

Residues 1–16 (FLEQQNKVLETKWKLL) are coil 1A. An IF rod domain is found at 1-296 (FLEQQNKVLE…YMLEGEEGRI (296 aa)). A linker 1 region spans residues 17–37 (QEQGTKGTTKRANLDPLFEKY). Residues 38–129 (IADLKKYLDN…TRDAAELSQV (92 aa)) are coil 1B. Residues 130 to 153 (HDQVTDTSVVLTMDNNRDLNLDSI) form a linker 12 region. Residues 154-292 (IKEVKCQYEQ…STYRYMLEGE (139 aa)) are coil 2. The tail stretch occupies residues 293 to 425 (EGRISGQIVN…STTSTTKKTY (133 aa)).

This sequence belongs to the intermediate filament family. As to quaternary structure, heterotetramer of two type I and two type II keratins.

The sequence is that of Keratin, type II cytoskeletal I from Xenopus laevis (African clawed frog).